The chain runs to 2267 residues: Acetyl-CoA carboxylase 1 (2267 aa).

A Biotin carboxylation domain is found at 38–544 (PIHSVLVANN…HTGWLDSRIA (507 aa)). In terms of domain architecture, ATP-grasp spans 190–384 (PESCNSIPEE…AAQVVVGMGV (195 aa)). Residue 216-273 (CQVVGYPAMIKASWGGGGKGIRKVHNDDEVRALFKQVQGEVPGSPIFIMKVASQSRHL) participates in ATP binding. Mg(2+)-binding residues include Glu-339, Glu-353, and Asn-355. Residues Glu-339, Glu-353, and Asn-355 each contribute to the Mn(2+) site. Arg-357 is a catalytic residue. In terms of domain architecture, Biotinyl-binding spans 671 to 745 (LQKEHDPSKL…QAADLIARLD (75 aa)). N6-biotinyllysine is present on Lys-712. The CoA carboxyltransferase N-terminal domain maps to 1502–1843 (PYKPLDAIDL…YVGGPLPIMK (342 aa)). Residues 1502–2163 (PYKPLDAIDL…EDALAKEIRE (662 aa)) form a carboxyltransferase region. Residues Arg-1752, Lys-2053, and Arg-2055 each coordinate CoA. Residues 1847–2163 (PPDRPVTYFP…EDALAKEIRE (317 aa)) form the CoA carboxyltransferase C-terminal domain.

As to quaternary structure, homodimer. The cofactor is Mg(2+). Mn(2+) serves as cofactor. It depends on biotin as a cofactor.

The protein resides in the cytoplasm. It localises to the cytosol. The enzyme catalyses hydrogencarbonate + acetyl-CoA + ATP = malonyl-CoA + ADP + phosphate + H(+). It catalyses the reaction N(6)-biotinyl-L-lysyl-[protein] + hydrogencarbonate + ATP = N(6)-carboxybiotinyl-L-lysyl-[protein] + ADP + phosphate + H(+). It participates in lipid metabolism; malonyl-CoA biosynthesis; malonyl-CoA from acetyl-CoA: step 1/1. Its function is as follows. Multifunctional enzyme that catalyzes the carboxylation of acetyl-CoA, forming malonyl-CoA, which is used in the plastid for fatty acid synthesis and in the cytosol in various biosynthetic pathways including fatty acid elongation. In Oryza sativa subsp. japonica (Rice), this protein is Acetyl-CoA carboxylase 1 (ACC1).